The chain runs to 698 residues: Polyribonucleotide nucleotidyltransferase (698 aa).

Positions 490 and 496 each coordinate Mg(2+). One can recognise a KH domain in the interval 557-616 (PKVVTMTIKPDKIRDVIGPGGKKINEIIDETGVKLDIEQDGTIFIGAVDQAMINRAREII). Residues 626–694 (GQTYQATVKR…KQGRVNASHR (69 aa)) form the S1 motif domain.

Belongs to the polyribonucleotide nucleotidyltransferase family. Mg(2+) is required as a cofactor.

The protein resides in the cytoplasm. It carries out the reaction RNA(n+1) + phosphate = RNA(n) + a ribonucleoside 5'-diphosphate. In terms of biological role, involved in mRNA degradation. Catalyzes the phosphorolysis of single-stranded polyribonucleotides processively in the 3'- to 5'-direction. This is Polyribonucleotide nucleotidyltransferase from Staphylococcus aureus (strain MSSA476).